A 508-amino-acid polypeptide reads, in one-letter code: MDFSIKACDWTKGSSNGFLTGKSDCIVIGVFESQTLSGAALEIDAATKGLLTRIIKAGDMDGKAGTTLFLHEVSGIGASRVLLVGLGKQDAFNQKAYGDAARAAWRALLSTKIVQVTFTLAQLPILERSADWAVRAAILALRELTYKFTQMKSKPDTSARALKRIVFSVNTGDEKAAKLAAKQGAALANGMDLTRDLGNLPSNVCTPTYLANTAKKLAKDWKLKVEVLGEKQCEALKMGSFLSVTAGSVEPAQFIVLQYQGGAAKAAPVVLVGKGVTFDTGGISLKPGEGMDEMKYDMCGAGSVLGTLRAVAEMGLKINVVGIIPAVENMPSATATKPGDIVTSMKGLTIEVLNTDAEGRLILCDALTYAERFKPAAVIDIATLTGACIIALGHHNSGLFSKDDALAGELLDASREASDPAWRMPLDDEYQDQLKSNFADLANIGGRPAGSVTAACFLSRFTEAYPWAHLDIAGTAWKSGAAKGATGRPVPLLAQFLIDRAADGRATQ.

Mn(2+) is bound by residues K274 and D279. K286 is a catalytic residue. Mn(2+) contacts are provided by D297, D356, and E358. R360 is an active-site residue.

This sequence belongs to the peptidase M17 family. It depends on Mn(2+) as a cofactor.

The protein localises to the cytoplasm. The catalysed reaction is Release of an N-terminal amino acid, Xaa-|-Yaa-, in which Xaa is preferably Leu, but may be other amino acids including Pro although not Arg or Lys, and Yaa may be Pro. Amino acid amides and methyl esters are also readily hydrolyzed, but rates on arylamides are exceedingly low.. The enzyme catalyses Release of an N-terminal amino acid, preferentially leucine, but not glutamic or aspartic acids.. Its function is as follows. Presumably involved in the processing and regular turnover of intracellular proteins. Catalyzes the removal of unsubstituted N-terminal amino acids from various peptides. In Paraburkholderia xenovorans (strain LB400), this protein is Probable cytosol aminopeptidase.